The chain runs to 502 residues: Lysine--tRNA ligase (502 aa).

Positions 411 and 418 each coordinate Mg(2+).

It belongs to the class-II aminoacyl-tRNA synthetase family. In terms of assembly, homodimer. It depends on Mg(2+) as a cofactor.

It is found in the cytoplasm. It catalyses the reaction tRNA(Lys) + L-lysine + ATP = L-lysyl-tRNA(Lys) + AMP + diphosphate. This Clostridium kluyveri (strain ATCC 8527 / DSM 555 / NBRC 12016 / NCIMB 10680 / K1) protein is Lysine--tRNA ligase.